Here is a 504-residue protein sequence, read N- to C-terminus: Sodium-coupled neutral amino acid symporter 2 (504 aa).

The interval 1–28 (MNKAPAQMSRFNIAPDMDSSSTNSNEYT) is disordered. The Cytoplasmic segment spans residues 1-79 (MNKAPAQMSR…SPGSASFGMS (79 aa)). A regulates protein turnover upon amino acid deprivation region spans residues 1–99 (MNKAPAQMSR…SGILGLSYAM (99 aa)). Low complexity predominate over residues 19–28 (SSSTNSNEYT). The helical transmembrane segment at 80–99 (VFNLGNAIMGSGILGLSYAM) threads the bilayer. Position 85 (Asn-85) interacts with Na(+). Residues 100–105 (ANTGIA) lie on the Extracellular side of the membrane. The chain crosses the membrane as a helical span at residues 106 to 126 (MFVILLVAVAIFSLYSVHLLL). The Cytoplasmic segment spans residues 127-161 (KTANEGGSLVYEQLGYKAFGIPGKLAASCSITMQN). Residues 162–180 (FGAMASYLYIVKYELPIVI) traverse the membrane as a helical segment. At 181–189 (RAFLDSNDN) the chain is on the extracellular side. A helical membrane pass occupies residues 190–210 (AWYTNGDYLVLIVTMSIILPL). Over 211–218 (SLLKNLGY) the chain is Cytoplasmic. Residues 219-239 (LGYTSGFSLLCMVFFLIVVIY) traverse the membrane as a helical segment. The Extracellular segment spans residues 240–285 (KKFQIPCPLPENFINITVNVSQPPQTNNSTDEECCKPKYFIFNSQT). A disulfide bridge links Cys-246 with Cys-274. Residues Asn-254 and Asn-258 are each glycosylated (N-linked (GlcNAc...) asparagine). Residues 286–306 (VYAVPILTFAFVCHPAILPMY) form a helical membrane-spanning segment. The Cytoplasmic segment spans residues 307–322 (EELKDRSRRKMQNVAN). A helical transmembrane segment spans residues 323–343 (VSFLGMFIMYLLAALFGYLTF). The Extracellular portion of the chain corresponds to 344-364 (NEAVEPELLHTYSKVYNFDVV). The chain crosses the membrane as a helical span at residues 365–385 (LLIVRLAVLTAVTLTVPVVLF). Na(+) is bound at residue Thr-379. Residues 386–406 (PIRTSVNHLLGASKEFSWPRH) lie on the Cytoplasmic side of the membrane. The helical transmembrane segment at 407–427 (ICITVALLVCVNILVIFVPTI) threads the bilayer. Over 428 to 429 (RD) the chain is Extracellular. Residues 430 to 450 (IFGFIGASAAAMLIFILPSAF) traverse the membrane as a helical segment. Residues 451-465 (YIKLVKKESMKSVQK) are Cytoplasmic-facing. Residues 466 to 488 (IGATLFLIMGFLVMTGSMALIIM) form a helical membrane-spanning segment. The Extracellular segment spans residues 489 to 504 (DWIHNALSSEEHTGGH).

Belongs to the amino acid/polyamine transporter 2 family.

The protein localises to the cell membrane. The enzyme catalyses L-alanine(in) + Na(+)(in) = L-alanine(out) + Na(+)(out). It catalyses the reaction glycine(in) + Na(+)(in) = glycine(out) + Na(+)(out). The catalysed reaction is L-serine(in) + Na(+)(in) = L-serine(out) + Na(+)(out). It carries out the reaction L-proline(in) + Na(+)(in) = L-proline(out) + Na(+)(out). The enzyme catalyses L-methionine(in) + Na(+)(in) = L-methionine(out) + Na(+)(out). It catalyses the reaction L-histidine(in) + Na(+)(in) = L-histidine(out) + Na(+)(out). The catalysed reaction is L-asparagine(in) + Na(+)(in) = L-asparagine(out) + Na(+)(out). It carries out the reaction L-glutamine(in) + Na(+)(in) = L-glutamine(out) + Na(+)(out). The enzyme catalyses L-threonine(in) + Na(+)(in) = L-threonine(out) + Na(+)(out). It catalyses the reaction L-leucine(in) + Na(+)(in) = L-leucine(out) + Na(+)(out). The catalysed reaction is L-phenylalanine(in) + Na(+)(in) = L-phenylalanine(out) + Na(+)(out). Its activity is regulated as follows. Inhibited by N-methyl-D-glucamine. Inhibited by choline. Allosteric regulation of sodium ions binding by pH. Symporter that cotransports neutral amino acids and sodium ions from the extracellular to the intracellular side of the cell membrane. The transport is pH-sensitive, Li(+)-intolerant, electrogenic, driven by the Na(+) electrochemical gradient and cotransports of neutral amino acids and sodium ions with a stoichiometry of 1:1. This is Sodium-coupled neutral amino acid symporter 2 from Danio rerio (Zebrafish).